The sequence spans 273 residues: Protein N-terminal and lysine N-methyltransferase EFM7 (273 aa).

The interval 1–32 (MSDIEDLASGGLFDEPKDFYKPEEQPGSDSYA) is disordered. Residues 14–24 (DEPKDFYKPEE) show a composition bias toward basic and acidic residues. S-adenosyl-L-methionine contacts are provided by residues W65, 92-94 (GAG), D114, W161, and S183.

It belongs to the class I-like SAM-binding methyltransferase superfamily. EFM7 family.

The protein resides in the cytoplasm. Functionally, S-adenosyl-L-methionine-dependent protein methyltransferase that trimethylates the N-terminal glycine 'Gly-2' of elongation factor 1-alpha, before also catalyzing the mono- and dimethylation of 'Lys-3'. In Yarrowia lipolytica (strain CLIB 122 / E 150) (Yeast), this protein is Protein N-terminal and lysine N-methyltransferase EFM7.